A 295-amino-acid polypeptide reads, in one-letter code: Putative attaching and effacing protein homolog (295 aa).

The N-terminal stretch at 1–25 is a signal peptide; sequence MSHYKTGHKQPRFRYSVLARCVAWA.

Belongs to the intimin/invasin family.

This Escherichia coli (strain K12) protein is Putative attaching and effacing protein homolog (eaeH).